Consider the following 389-residue polypeptide: Geranylgeranyl pyrophosphate synthase A (389 aa).

Positions 99, 102, and 131 each coordinate isopentenyl diphosphate. Residues D138 and D142 each coordinate Mg(2+). Dimethylallyl diphosphate is bound at residue R147. R148 provides a ligand contact to isopentenyl diphosphate.

Belongs to the FPP/GGPP synthase family. The cofactor is Mg(2+).

The protein localises to the cytoplasm. The catalysed reaction is isopentenyl diphosphate + (2E)-geranyl diphosphate = (2E,6E)-farnesyl diphosphate + diphosphate. It carries out the reaction isopentenyl diphosphate + (2E,6E)-farnesyl diphosphate = (2E,6E,10E)-geranylgeranyl diphosphate + diphosphate. Its pathway is isoprenoid biosynthesis; farnesyl diphosphate biosynthesis; farnesyl diphosphate from geranyl diphosphate and isopentenyl diphosphate: step 1/1. It functions in the pathway isoprenoid biosynthesis; geranylgeranyl diphosphate biosynthesis; geranylgeranyl diphosphate from farnesyl diphosphate and isopentenyl diphosphate: step 1/1. Catalyzes the trans-addition of the 2 molecules of isopentenyl diphosphate (IPP) onto geranyl diphosphate (GDP) to form geranylgeranyl pyrophosphate (GGDP). Does not catalyze the conversion of dimethylallyl diphosphate (DMAPP). This is Geranylgeranyl pyrophosphate synthase A (GGS-A) from Phomopsis amygdali (Fusicoccum amygdali).